The chain runs to 304 residues: Ribonuclease Z (304 aa).

Positions 63, 65, 67, 68, 143, 213, and 271 each coordinate Zn(2+). The active-site Proton acceptor is the D67.

The protein belongs to the RNase Z family. In terms of assembly, homodimer. Zn(2+) serves as cofactor.

The catalysed reaction is Endonucleolytic cleavage of RNA, removing extra 3' nucleotides from tRNA precursor, generating 3' termini of tRNAs. A 3'-hydroxy group is left at the tRNA terminus and a 5'-phosphoryl group is left at the trailer molecule.. Its function is as follows. Zinc phosphodiesterase, which displays some tRNA 3'-processing endonuclease activity. Probably involved in tRNA maturation, by removing a 3'-trailer from precursor tRNA. The protein is Ribonuclease Z of Porphyromonas gingivalis (strain ATCC 33277 / DSM 20709 / CIP 103683 / JCM 12257 / NCTC 11834 / 2561).